The following is a 119-amino-acid chain: Large ribosomal subunit protein bL20 (119 aa).

The protein belongs to the bacterial ribosomal protein bL20 family.

Functionally, binds directly to 23S ribosomal RNA and is necessary for the in vitro assembly process of the 50S ribosomal subunit. It is not involved in the protein synthesizing functions of that subunit. This is Large ribosomal subunit protein bL20 from Stenotrophomonas maltophilia (strain R551-3).